Here is a 31-residue protein sequence, read N- to C-terminus: Aspartate racemase (31 aa).

Residues 1–31 (PVAPEYLFKKEEDKGANKEEEEVAPELGIRA) are disordered. Over residues 7 to 18 (LFKKEEDKGANK) the composition is skewed to basic and acidic residues.

Belongs to the aspartate/glutamate racemases family. Pyridoxal 5'-phosphate serves as cofactor.

The catalysed reaction is L-aspartate = D-aspartate. With respect to regulation, inhibited by hydroxylamine, aminooxyacetate, phenylhydrazine and sodium borohydride. In terms of biological role, highly specific toward aspartate and entirely inactive on glutamate, alanine and serine. This Anadara broughtonii (Blood clam) protein is Aspartate racemase.